The sequence spans 961 residues: Outer capsid protein VP2 (961 aa).

Belongs to the orbivirus VP2 family.

Its subcellular location is the virion. Its function is as follows. The VP2 protein is one of the two proteins (with VP5) which constitute the virus particle outer capsid. It is the major target of the host immunogenic response. Responsible for viral attachment to target host cell, probably by binding to sialic acid. This attachment induces virion internalization predominantly through clathrin-dependent endocytosis. The polypeptide is Outer capsid protein VP2 (Segment-2) (Bluetongue virus 1 (isolate South Africa vaccine) (BTV 1)).